The sequence spans 230 residues: Leucyl/phenylalanyl-tRNA--protein transferase (230 aa).

The protein belongs to the L/F-transferase family.

It localises to the cytoplasm. The enzyme catalyses N-terminal L-lysyl-[protein] + L-leucyl-tRNA(Leu) = N-terminal L-leucyl-L-lysyl-[protein] + tRNA(Leu) + H(+). It carries out the reaction N-terminal L-arginyl-[protein] + L-leucyl-tRNA(Leu) = N-terminal L-leucyl-L-arginyl-[protein] + tRNA(Leu) + H(+). The catalysed reaction is L-phenylalanyl-tRNA(Phe) + an N-terminal L-alpha-aminoacyl-[protein] = an N-terminal L-phenylalanyl-L-alpha-aminoacyl-[protein] + tRNA(Phe). Functionally, functions in the N-end rule pathway of protein degradation where it conjugates Leu, Phe and, less efficiently, Met from aminoacyl-tRNAs to the N-termini of proteins containing an N-terminal arginine or lysine. This Erwinia tasmaniensis (strain DSM 17950 / CFBP 7177 / CIP 109463 / NCPPB 4357 / Et1/99) protein is Leucyl/phenylalanyl-tRNA--protein transferase.